We begin with the raw amino-acid sequence, 313 residues long: Endo-beta-N-acetylglucosaminidase H (313 aa).

The segment at residues 1–42 is a signal peptide (or 44); the sequence is MFTPVRRRVRTAALALSAAAALVLGSTAASGASATPSPAPAP. A GH18 domain is found at 51–307; sequence PTSVAYVEVN…SAFTRELYGS (257 aa). E174 acts as the Proton donor in catalysis.

The protein belongs to the glycosyl hydrolase 18 family.

The enzyme catalyses an N(4)-(oligosaccharide-(1-&gt;3)-[oligosaccharide-(1-&gt;6)]-beta-D-Man-(1-&gt;4)-beta-D-GlcNAc-(1-&gt;4)-alpha-D-GlcNAc)-L-asparaginyl-[protein] + H2O = an oligosaccharide-(1-&gt;3)-[oligosaccharide-(1-&gt;6)]-beta-D-Man-(1-&gt;4)-D-GlcNAc + N(4)-(N-acetyl-beta-D-glucosaminyl)-L-asparaginyl-[protein]. In terms of biological role, cleaves asparagine-linked oligomannose and hybrid, but not complex, oligosaccharides from glycoproteins. This Streptomyces plicatus protein is Endo-beta-N-acetylglucosaminidase H.